A 188-amino-acid polypeptide reads, in one-letter code: Probable RNA 2'-phosphotransferase (188 aa).

This sequence belongs to the KptA/TPT1 family.

In terms of biological role, removes the 2'-phosphate from RNA via an intermediate in which the phosphate is ADP-ribosylated by NAD followed by a presumed transesterification to release the RNA and generate ADP-ribose 1''-2''-cyclic phosphate (APPR&gt;P). May function as an ADP-ribosylase. The sequence is that of Probable RNA 2'-phosphotransferase from Pseudomonas savastanoi pv. phaseolicola (strain 1448A / Race 6) (Pseudomonas syringae pv. phaseolicola (strain 1448A / Race 6)).